Reading from the N-terminus, the 183-residue chain is ATP synthase subunit b, chloroplastic (183 aa).

The helical transmembrane segment at 28–48 threads the bilayer; that stretch reads DIFEANVINILLLLFGLIYVL.

This sequence belongs to the ATPase B chain family. In terms of assembly, F-type ATPases have 2 components, F(1) - the catalytic core - and F(0) - the membrane proton channel. F(1) has five subunits: alpha(3), beta(3), gamma(1), delta(1), epsilon(1). F(0) has four main subunits: a(1), b(1), b'(1) and c(10-14). The alpha and beta chains form an alternating ring which encloses part of the gamma chain. F(1) is attached to F(0) by a central stalk formed by the gamma and epsilon chains, while a peripheral stalk is formed by the delta, b and b' chains.

It is found in the plastid. It localises to the chloroplast thylakoid membrane. Its function is as follows. F(1)F(0) ATP synthase produces ATP from ADP in the presence of a proton or sodium gradient. F-type ATPases consist of two structural domains, F(1) containing the extramembraneous catalytic core and F(0) containing the membrane proton channel, linked together by a central stalk and a peripheral stalk. During catalysis, ATP synthesis in the catalytic domain of F(1) is coupled via a rotary mechanism of the central stalk subunits to proton translocation. In terms of biological role, component of the F(0) channel, it forms part of the peripheral stalk, linking F(1) to F(0). This chain is ATP synthase subunit b, chloroplastic, found in Pyropia yezoensis (Susabi-nori).